The following is a 246-amino-acid chain: Acetoacetate decarboxylase (246 aa).

Lysine 116 (schiff-base intermediate with acetoacetate) is an active-site residue.

The protein belongs to the ADC family. Homododecamer.

It carries out the reaction acetoacetate + H(+) = acetone + CO2. Its function is as follows. Catalyzes the conversion of acetoacetate to acetone and carbon dioxide. In Chromobacterium violaceum (strain ATCC 12472 / DSM 30191 / JCM 1249 / CCUG 213 / NBRC 12614 / NCIMB 9131 / NCTC 9757 / MK), this protein is Acetoacetate decarboxylase.